A 241-amino-acid polypeptide reads, in one-letter code: Antimicrobial ginkbilobin-2-like protein (241 aa).

The N-terminal stretch at 1–23 (MLSSKYISVSFLLLSLSLHAVNC) is a signal peptide. 2 consecutive Gnk2-homologous domains span residues 25–127 (DPLY…NIDF) and 133–238 (NKNK…LYPF). Disulfide bonds link Cys81–Cys90, Cys93–Cys118, Cys192–Cys201, and Cys204–Cys229. The N-linked (GlcNAc...) asparagine glycan is linked to Asn89.

The protein belongs to the cysteine-rich repeat secretory protein family.

Its subcellular location is the secreted. Possesses antimicrobial activity toward the oomycete Phytophthora cinnamomi (ink disease agent), thus reducing its growth rate and confering an increased resistance to the plant. This chain is Antimicrobial ginkbilobin-2-like protein, found in Castanea crenata (Japanese chestnut).